The chain runs to 352 residues: Heat-inducible transcription repressor HrcA (352 aa).

Belongs to the HrcA family.

Its function is as follows. Negative regulator of class I heat shock genes (grpE-dnaK-dnaJ and groELS operons). Prevents heat-shock induction of these operons. The polypeptide is Heat-inducible transcription repressor HrcA (Latilactobacillus sakei subsp. sakei (strain 23K) (Lactobacillus sakei subsp. sakei)).